A 295-amino-acid chain; its full sequence is Perivine-Nbeta-methyltransferase (295 aa).

The interval I76–G85 is SAM motif I. A Vacuolar targeting signal motif is present at residues D138 to I144. The segment at G139 to I147 is SAM motif II. Positions V166–I175 are SAM motif III.

The protein belongs to the class I-like SAM-binding methyltransferase superfamily. gTMT family. As to quaternary structure, homodimer. In terms of tissue distribution, mainly expressed in young leaves, and, to a lower extent, in mature leaves, flowers, stems and roots (at protein level). Transcripts levels are highest in flowers, moderate in leaves and low in roots and stems.

Its subcellular location is the vacuole membrane. It catalyses the reaction perivine + S-adenosyl-L-methionine = vobasine + S-adenosyl-L-homocysteine + 2 H(+). It participates in alkaloid biosynthesis; vindoline biosynthesis. S-adenosyl-L-methionine-dependent N-methyltransferase involved in the biosynthesis of biologically active monoterpenoid indole alkaloids (MIAs) natural products including vindoline. Catalyzes the conversion of perivine to Nbeta-methylperivine (vobasine) by methylating its N4 nitrogen. Inactive with picrinine as substrate. The polypeptide is Perivine-Nbeta-methyltransferase (Catharanthus roseus (Madagascar periwinkle)).